Reading from the N-terminus, the 26-residue chain is L-amino-acid oxidase (26 aa).

The protein belongs to the flavin monoamine oxidase family. Monomer. Requires FAD as cofactor. In terms of processing, not glycosylated. In terms of tissue distribution, expressed by the ink gland.

Its subcellular location is the secreted. The enzyme catalyses an L-alpha-amino acid + O2 + H2O = a 2-oxocarboxylate + H2O2 + NH4(+). Catalyzes the oxidative deamination of positively charged L-amino acids L-Lys and L-Arg but not of amino acids L-His, L-Asp or L-Glu. Has antibacterial activity against the Gram-positive bacterium S.aureus (MIC=15 ug/ml). This antibacterial activity is bacteriostatic in the absence of amino acids L-Lys or L-Arg but bactericidal in their presence. The antibacterial effect is largely dependent on H(2)O(2) produced in the oxidative deamination of substrates. Has hemagglutinating activity towards rabbit erythrocytes. Hemagglutinating activity is inhibited by the glycoprotein fetuin, but not by glucose, mannose, galactose, N-acetylglucosamine, N-acetylgalactosamine or sialic acid. This Aplysia dactylomela (Spotted sea hare) protein is L-amino-acid oxidase.